The primary structure comprises 211 residues: MAVVPLLLLGGLWSAVGASSLGVVTCGSVVKLLNTRHNVRLHSHDVRYGSGSGQQSVTGVTSVDDSNSYWRIRGKSATVCERGTPIKCGQPIRLTHVNTGRNLHSHHFTSPLSGNQEVSAFGEEGEGDYLDDWTVLCNGPYWVRDGEVRFKHSSTEVLLSVTGEQYGRPISGQKEVHGMAQPSQNNYWKAMEGIFMKPSELLKAEAHHAEL.

Positions 1 to 18 are cleaved as a signal peptide; that stretch reads MAVVPLLLLGGLWSAVGA. 3 consecutive MIR domains span residues 21–75, 83–138, and 139–193; these read LGVV…IRGK, GTPI…VLCN, and GPYW…AMEG.

The protein localises to the secreted. The polypeptide is Stromal cell-derived factor 2 (SDF2) (Homo sapiens (Human)).